The sequence spans 314 residues: DNA-directed RNA polymerase subunit alpha (314 aa).

Residues 1–227 are alpha N-terminal domain (alpha-NTD); it reads MTTFEIECIE…ELLFPLKEIN (227 aa). Residues 237 to 314 are alpha C-terminal domain (alpha-CTD); sequence IEDSKINQIL…LPKEKTSKSN (78 aa).

It belongs to the RNA polymerase alpha chain family. As to quaternary structure, in plastids the minimal PEP RNA polymerase catalytic core is composed of four subunits: alpha, beta, beta', and beta''. When a (nuclear-encoded) sigma factor is associated with the core the holoenzyme is formed, which can initiate transcription.

The protein localises to the plastid. The protein resides in the chloroplast. It catalyses the reaction RNA(n) + a ribonucleoside 5'-triphosphate = RNA(n+1) + diphosphate. Functionally, DNA-dependent RNA polymerase catalyzes the transcription of DNA into RNA using the four ribonucleoside triphosphates as substrates. The chain is DNA-directed RNA polymerase subunit alpha from Pyrenomonas salina.